A 114-amino-acid polypeptide reads, in one-letter code: Hydrogenase maturation factor HypA (114 aa).

Histidine 2 lines the Ni(2+) pocket. Zn(2+)-binding residues include cysteine 73, cysteine 76, cysteine 90, and cysteine 93.

It belongs to the HypA/HybF family.

In terms of biological role, involved in the maturation of [NiFe] hydrogenases. Required for nickel insertion into the metal center of the hydrogenase. In Chloroflexus aggregans (strain MD-66 / DSM 9485), this protein is Hydrogenase maturation factor HypA.